The following is a 441-amino-acid chain: Glutamate--tRNA ligase 2 (441 aa).

The 'HIGH' region signature appears at 9-19 (PSPTGYIHVGN). The 'KMSKS' region signature appears at 239–243 (ALSKR). Lys-242 contributes to the ATP binding site.

It belongs to the class-I aminoacyl-tRNA synthetase family. Glutamate--tRNA ligase type 1 subfamily. In terms of assembly, monomer.

It localises to the cytoplasm. The enzyme catalyses tRNA(Glu) + L-glutamate + ATP = L-glutamyl-tRNA(Glu) + AMP + diphosphate. Catalyzes the attachment of glutamate to tRNA(Glu) in a two-step reaction: glutamate is first activated by ATP to form Glu-AMP and then transferred to the acceptor end of tRNA(Glu). In Cereibacter sphaeroides (strain ATCC 17029 / ATH 2.4.9) (Rhodobacter sphaeroides), this protein is Glutamate--tRNA ligase 2.